We begin with the raw amino-acid sequence, 230 residues long: Leucyl/phenylalanyl-tRNA--protein transferase (230 aa).

This sequence belongs to the L/F-transferase family.

It is found in the cytoplasm. It catalyses the reaction N-terminal L-lysyl-[protein] + L-leucyl-tRNA(Leu) = N-terminal L-leucyl-L-lysyl-[protein] + tRNA(Leu) + H(+). The catalysed reaction is N-terminal L-arginyl-[protein] + L-leucyl-tRNA(Leu) = N-terminal L-leucyl-L-arginyl-[protein] + tRNA(Leu) + H(+). It carries out the reaction L-phenylalanyl-tRNA(Phe) + an N-terminal L-alpha-aminoacyl-[protein] = an N-terminal L-phenylalanyl-L-alpha-aminoacyl-[protein] + tRNA(Phe). In terms of biological role, functions in the N-end rule pathway of protein degradation where it conjugates Leu, Phe and, less efficiently, Met from aminoacyl-tRNAs to the N-termini of proteins containing an N-terminal arginine or lysine. The protein is Leucyl/phenylalanyl-tRNA--protein transferase of Syntrophotalea carbinolica (strain DSM 2380 / NBRC 103641 / GraBd1) (Pelobacter carbinolicus).